Reading from the N-terminus, the 257-residue chain is Ribonuclease HII (257 aa).

The region spanning 72 to 257 (TYIAGIDEVG…FAPIKDMIQK (186 aa)) is the RNase H type-2 domain. A divalent metal cation contacts are provided by D78, E79, and D170.

Belongs to the RNase HII family. Mn(2+) is required as a cofactor. Requires Mg(2+) as cofactor.

It localises to the cytoplasm. It carries out the reaction Endonucleolytic cleavage to 5'-phosphomonoester.. Its function is as follows. Endonuclease that specifically degrades the RNA of RNA-DNA hybrids. This is Ribonuclease HII from Bacillus cereus (strain AH820).